Consider the following 388-residue polypeptide: Succinate--CoA ligase [ADP-forming] subunit beta (388 aa).

One can recognise an ATP-grasp domain in the interval 9 to 244 (KQLFAEYGLP…PSQDDAREAH (236 aa)). Residues Lys46, 53–55 (GRG), Glu99, Thr102, and Glu107 each bind ATP. Asn199 and Asp213 together coordinate Mg(2+). Residues Asn264 and 321-323 (GIV) each bind substrate.

The protein belongs to the succinate/malate CoA ligase beta subunit family. In terms of assembly, heterotetramer of two alpha and two beta subunits. Requires Mg(2+) as cofactor.

The catalysed reaction is succinate + ATP + CoA = succinyl-CoA + ADP + phosphate. It catalyses the reaction GTP + succinate + CoA = succinyl-CoA + GDP + phosphate. Its pathway is carbohydrate metabolism; tricarboxylic acid cycle; succinate from succinyl-CoA (ligase route): step 1/1. In terms of biological role, succinyl-CoA synthetase functions in the citric acid cycle (TCA), coupling the hydrolysis of succinyl-CoA to the synthesis of either ATP or GTP and thus represents the only step of substrate-level phosphorylation in the TCA. The beta subunit provides nucleotide specificity of the enzyme and binds the substrate succinate, while the binding sites for coenzyme A and phosphate are found in the alpha subunit. The protein is Succinate--CoA ligase [ADP-forming] subunit beta of Pseudomonas aeruginosa (strain UCBPP-PA14).